The following is a 269-amino-acid chain: 4-hydroxy-tetrahydrodipicolinate reductase (269 aa).

NAD(+) is bound by residues 8 to 13 (GAAGRM) and Glu-34. NADP(+) is bound at residue Arg-35. NAD(+) contacts are provided by residues 98-100 (GTT) and 122-125 (APNY). The active-site Proton donor/acceptor is His-155. His-156 lines the (S)-2,3,4,5-tetrahydrodipicolinate pocket. Catalysis depends on Lys-159, which acts as the Proton donor. 165–166 (GT) contributes to the (S)-2,3,4,5-tetrahydrodipicolinate binding site.

The protein belongs to the DapB family.

It localises to the cytoplasm. The enzyme catalyses (S)-2,3,4,5-tetrahydrodipicolinate + NAD(+) + H2O = (2S,4S)-4-hydroxy-2,3,4,5-tetrahydrodipicolinate + NADH + H(+). It carries out the reaction (S)-2,3,4,5-tetrahydrodipicolinate + NADP(+) + H2O = (2S,4S)-4-hydroxy-2,3,4,5-tetrahydrodipicolinate + NADPH + H(+). Its pathway is amino-acid biosynthesis; L-lysine biosynthesis via DAP pathway; (S)-tetrahydrodipicolinate from L-aspartate: step 4/4. Functionally, catalyzes the conversion of 4-hydroxy-tetrahydrodipicolinate (HTPA) to tetrahydrodipicolinate. The protein is 4-hydroxy-tetrahydrodipicolinate reductase of Vibrio vulnificus (strain CMCP6).